The sequence spans 519 residues: Ribose import ATP-binding protein RbsA 2 (519 aa).

2 ABC transporter domains span residues 15 to 252 (FRLR…VGRP) and 262 to 506 (HEPG…TGVR). 47–54 (GENGAGKS) contributes to the ATP binding site.

This sequence belongs to the ABC transporter superfamily. Ribose importer (TC 3.A.1.2.1) family. The complex is composed of an ATP-binding protein (RbsA), two transmembrane proteins (RbsC) and a solute-binding protein (RbsB).

It is found in the cell membrane. The catalysed reaction is D-ribose(out) + ATP + H2O = D-ribose(in) + ADP + phosphate + H(+). Its function is as follows. Part of the ABC transporter complex RbsABC involved in ribose import. Responsible for energy coupling to the transport system. This Rubrobacter xylanophilus (strain DSM 9941 / JCM 11954 / NBRC 16129 / PRD-1) protein is Ribose import ATP-binding protein RbsA 2.